Reading from the N-terminus, the 432-residue chain is Polypyrimidine tract-binding protein homolog 3 (432 aa).

RRM domains lie at 6–80 (KVVH…FSSH), 98–187 (NRIL…YNND), 245–319 (CTVL…FSKH), and 355–429 (KMIH…FSQL).

The protein resides in the nucleus. Functionally, plays a role in pre-mRNA splicing. Binds to the polypyrimidine tract of introns. May promote the binding of U2 snRNP to pre-mRNA. The protein is Polypyrimidine tract-binding protein homolog 3 of Arabidopsis thaliana (Mouse-ear cress).